Here is a 402-residue protein sequence, read N- to C-terminus: NADH-quinone oxidoreductase subunit D (402 aa).

Belongs to the complex I 49 kDa subunit family. In terms of assembly, NDH-1 is composed of 14 different subunits. Subunits NuoB, C, D, E, F, and G constitute the peripheral sector of the complex.

It is found in the cell inner membrane. The enzyme catalyses a quinone + NADH + 5 H(+)(in) = a quinol + NAD(+) + 4 H(+)(out). Its function is as follows. NDH-1 shuttles electrons from NADH, via FMN and iron-sulfur (Fe-S) centers, to quinones in the respiratory chain. The immediate electron acceptor for the enzyme in this species is believed to be ubiquinone. Couples the redox reaction to proton translocation (for every two electrons transferred, four hydrogen ions are translocated across the cytoplasmic membrane), and thus conserves the redox energy in a proton gradient. The chain is NADH-quinone oxidoreductase subunit D from Rhodopseudomonas palustris (strain TIE-1).